The following is a 276-amino-acid chain: uncharacterized protein (276 aa).

One can recognise an AB hydrolase-1 domain in the interval 20-137; sequence PVLIFIPGAN…PPINTFLPDS (118 aa). A disordered region spans residues 57–76; the sequence is GESELTEPLPDSASNPDSDY.

This sequence belongs to the AB hydrolase superfamily.

This is an uncharacterized protein from Staphylococcus aureus (strain MW2).